The primary structure comprises 469 residues: Glutamine synthetase (469 aa).

A GS beta-grasp domain is found at Asn-14–Thr-98. The GS catalytic domain occupies Pro-106 to Val-469. Positions 131 and 133 each coordinate Mg(2+). Glu-209 contacts ATP. The Mg(2+) site is built by Glu-214 and Glu-221. L-glutamate contacts are provided by residues Asn-265–Gly-266 and Gly-266. A Mg(2+)-binding site is contributed by His-270. ATP-binding positions include His-272–Ser-274 and Ser-274. Residues Arg-322, Glu-328, and Arg-340 each coordinate L-glutamate. ATP-binding residues include Arg-340, Arg-345, and Lys-353. Mg(2+) is bound at residue Glu-358. Position 360 (Arg-360) interacts with L-glutamate. Tyr-398 carries the O-AMP-tyrosine modification.

Belongs to the glutamine synthetase family. As to quaternary structure, oligomer of 12 subunits arranged in the form of two hexameric ring. Mg(2+) is required as a cofactor.

Its subcellular location is the cytoplasm. The catalysed reaction is L-glutamate + NH4(+) + ATP = L-glutamine + ADP + phosphate + H(+). Its activity is regulated as follows. The activity of this enzyme could be controlled by adenylation under conditions of abundant glutamine. Catalyzes the ATP-dependent biosynthesis of glutamine from glutamate and ammonia. In Azorhizobium caulinodans (strain ATCC 43989 / DSM 5975 / JCM 20966 / LMG 6465 / NBRC 14845 / NCIMB 13405 / ORS 571), this protein is Glutamine synthetase.